A 271-amino-acid chain; its full sequence is Dirigent protein 17 (271 aa).

The span at M1–Q12 shows a compositional bias: polar residues. The segment at M1–P22 is disordered. An N-linked (GlcNAc...) asparagine glycan is attached at N255.

Belongs to the plant dirigent protein family. In terms of assembly, homodimer.

It is found in the secreted. Its subcellular location is the extracellular space. It localises to the apoplast. In terms of biological role, dirigent proteins impart stereoselectivity on the phenoxy radical-coupling reaction, yielding optically active lignans from two molecules of coniferyl alcohol in the biosynthesis of lignans, flavonolignans, and alkaloids and thus plays a central role in plant secondary metabolism. The sequence is that of Dirigent protein 17 (DIR17) from Arabidopsis thaliana (Mouse-ear cress).